Consider the following 175-residue polypeptide: UPF0398 protein SGO_0588 (175 aa).

It belongs to the UPF0398 family.

The sequence is that of UPF0398 protein SGO_0588 from Streptococcus gordonii (strain Challis / ATCC 35105 / BCRC 15272 / CH1 / DL1 / V288).